We begin with the raw amino-acid sequence, 187 residues long: Elongation factor P (187 aa).

This sequence belongs to the elongation factor P family.

The protein resides in the cytoplasm. It participates in protein biosynthesis; polypeptide chain elongation. Its function is as follows. Involved in peptide bond synthesis. Stimulates efficient translation and peptide-bond synthesis on native or reconstituted 70S ribosomes in vitro. Probably functions indirectly by altering the affinity of the ribosome for aminoacyl-tRNA, thus increasing their reactivity as acceptors for peptidyl transferase. This Arthrobacter sp. (strain FB24) protein is Elongation factor P.